A 121-amino-acid chain; its full sequence is Met-lysine-1a (121 aa).

The N-terminal stretch at 1 to 22 (MKSFVFALALIVAFACISESKS) is a signal peptide. A propeptide spanning residues 23 to 69 (DHTGYEEEENLEDSELTDLVTAALLEELAEASEMDDLSYTEEAGGER) is cleaved from the precursor. Position 120 is a methionine amide (M120).

In terms of tissue distribution, expressed by the venom gland.

Its subcellular location is the secreted. Shows no antimicrobial activity against Gram-positive bacterium B.subtilis B-501 or Gram-negative bacterium E.coli DH5-alpha at concentrations up to 20 ug/ml. Shows no toxicity towards insect (S.carnaria) larvae. This is Met-lysine-1a from Lachesana tarabaevi (Spider).